Consider the following 200-residue polypeptide: Cysteine-rich venom protein VAR8 (200 aa).

Residues 1–22 (MILLKLYLTLAAILCQSRGTTS) form the signal peptide. Residues 41 to 169 (NKHNDLRRTV…PLKYFLVCQY (129 aa)) enclose the SCP domain. 4 cysteine pairs are disulfide-bonded: cysteine 77-cysteine 156, cysteine 95-cysteine 170, cysteine 151-cysteine 167, and cysteine 189-cysteine 196.

The protein belongs to the CRISP family. Post-translationally, contains 8 disulfide bonds. In terms of tissue distribution, expressed by the venom gland.

It localises to the secreted. Functionally, blocks ryanodine receptors, and potassium channels. The chain is Cysteine-rich venom protein VAR8 from Varanus acanthurus (Ridge-tailed monitor).